The chain runs to 756 residues: MQHRKELQARTRDQLQTLELSTSLYDTAWVAMVPLRGSRQHPCFPQCVEWILQNQQDDGSWGTRGFGVAVTRDVLSSTLACVLALKRWNVGQEHIRRGLDFIGRNFSIAMDEQIAAPVGFNITFPGMLSLAMGMDLEFPVRQTDVDRLLHLREIELEREAGDHSYGRKAYMAYVTEGLGNLLEWDEIMMFQRKNGSFFNCPSTTAATLVNHYNDKALQYLNCLVSKFGSAVPTVYPLNIYCQLSWVDALEKMGISQYFVSEIKSILDTTYVSWLERDEEIMLDITTCAMAFRLLRMNGYHVSSVELSPVAEASSFRESLQGYLNDKKSLIELYKASKVSKSENESILDSIGSWSGSLLKESVCSNGVKKAPIFEEMKYALKFPFYTTLDRLDHKRNIERFDAKDSQMLKTEYLLPHANQDILALAVEDFSSSQSIYQDELNYLECWVKDEKLDQLPFARQKLTYCYLSAAATIFPRELSEARIAWAKNGVLTTVVDDFFDLGGSKEELENLIALVEKWDGHQEEFYSEQVRIVFSAIYTTVNQLGAKASALQGRDVTKHLTEIWLCLMRSMMTEAEWQRTKYVPTMEEYMANAVVSFALGPIVLPTLYFVGPKLQEDVVRDHEYNELFRLMSTCGRLLNDSQGFERESLEGKLNSVSLLVHHSGGSISIDEAKMKAQKSIDTSRRNLLRLVLGEQGAVPRPCKQLFWKMCKIVHMFYSRTDGFSSPKEMVSAVNAVVKEPLKLKVSDPYGSILSGN.

Positions 496, 500, 639, and 647 each coordinate Mg(2+). Positions 496–500 (DDFFD) match the DDXXD motif motif.

It belongs to the terpene synthase family. Mg(2+) serves as cofactor. In terms of tissue distribution, highly expressed in panicles and at lower levels in leaves and stems.

Its subcellular location is the plastid. It localises to the chloroplast. It carries out the reaction ent-copalyl diphosphate = ent-kaur-16-ene + diphosphate. It functions in the pathway plant hormone biosynthesis; gibberellin biosynthesis. Its function is as follows. Catalyzes the conversion of ent-copalyl diphosphate to the gibberellin precursor ent-kaur-16-ene. This Oryza sativa subsp. japonica (Rice) protein is Ent-kaur-16-ene synthase, chloroplastic (KS1).